The primary structure comprises 388 residues: Probable Na(+)/H(+) antiporter 3 (388 aa).

A run of 12 helical transmembrane segments spans residues 2-22 (ESYY…PNLL), 27-47 (IPAI…GLNI), 53-73 (TLKI…GLEV), 81-101 (EFKN…VGGY), 102-122 (LIGQ…VIFA), 146-166 (IILS…SVVI), 175-195 (VGTF…AIPS), 215-235 (VLFI…HPIV), 263-283 (AIGY…ETNI), 294-314 (LLLI…FIAL), 325-345 (TIGG…ASIG), and 354-374 (EIFV…PIVV).

This sequence belongs to the monovalent cation:proton antiporter 1 (CPA1) transporter (TC 2.A.36) family.

It localises to the cell membrane. Functionally, this is probably a Na(+)/H(+) antiporter. In Methanocaldococcus jannaschii (strain ATCC 43067 / DSM 2661 / JAL-1 / JCM 10045 / NBRC 100440) (Methanococcus jannaschii), this protein is Probable Na(+)/H(+) antiporter 3.